A 313-amino-acid chain; its full sequence is Ribosomal RNA small subunit methyltransferase H (313 aa).

S-adenosyl-L-methionine contacts are provided by residues 35-37, Asp55, Phe80, Asp102, and Gln109; that span reads GGH.

It belongs to the methyltransferase superfamily. RsmH family.

Its subcellular location is the cytoplasm. It catalyses the reaction cytidine(1402) in 16S rRNA + S-adenosyl-L-methionine = N(4)-methylcytidine(1402) in 16S rRNA + S-adenosyl-L-homocysteine + H(+). Functionally, specifically methylates the N4 position of cytidine in position 1402 (C1402) of 16S rRNA. The polypeptide is Ribosomal RNA small subunit methyltransferase H (Shewanella sp. (strain MR-4)).